Consider the following 156-residue polypeptide: Peptide deformylase 1 (156 aa).

C90 and H132 together coordinate Fe cation. E133 is a catalytic residue. H136 lines the Fe cation pocket.

Belongs to the polypeptide deformylase family. Fe(2+) is required as a cofactor.

It catalyses the reaction N-terminal N-formyl-L-methionyl-[peptide] + H2O = N-terminal L-methionyl-[peptide] + formate. Removes the formyl group from the N-terminal Met of newly synthesized proteins. Requires at least a dipeptide for an efficient rate of reaction. N-terminal L-methionine is a prerequisite for activity but the enzyme has broad specificity at other positions. This Bacillus anthracis protein is Peptide deformylase 1.